Reading from the N-terminus, the 348-residue chain is Phenylalanine--tRNA ligase alpha subunit (348 aa).

Residue glutamate 262 coordinates Mg(2+).

Belongs to the class-II aminoacyl-tRNA synthetase family. Phe-tRNA synthetase alpha subunit type 1 subfamily. In terms of assembly, tetramer of two alpha and two beta subunits. Mg(2+) serves as cofactor.

The protein localises to the cytoplasm. It catalyses the reaction tRNA(Phe) + L-phenylalanine + ATP = L-phenylalanyl-tRNA(Phe) + AMP + diphosphate + H(+). The chain is Phenylalanine--tRNA ligase alpha subunit from Streptococcus pneumoniae serotype 2 (strain D39 / NCTC 7466).